We begin with the raw amino-acid sequence, 327 residues long: Probable cell division protein WhiA (327 aa).

The H-T-H motif DNA-binding region spans Ser-275–Lys-308. The segment at Lys-306–Ala-327 is disordered.

It belongs to the WhiA family.

Functionally, involved in cell division and chromosome segregation. The sequence is that of Probable cell division protein WhiA from Rhodococcus jostii (strain RHA1).